The primary structure comprises 554 residues: MTTSTPDIQPAVQHTAQVAIVGAGPVGLMMANYLGQMGISVLVVEKLATLIDYPRAIGIDDESLRAMQAVGLVNDVLPHTTPWHAMRFLTPKGRCFADIQPMTDEFGWSRRNAFIQPQVDAVMYHGLQRFPQVRCLFSREVGAFSQTGDSVTLNLKGPDGERETVRADWLVACDGGASFIRRTLNIPFEGKTAPNQWIVIDIANDPLATPHVYLCCDPVRPYVSAALPHGVRRFEFMVMPGETEAQLSEPHNMRRLLSKVLPDPDRVELIRQRVYTHNARLAERFRINRVLLAGDAAHIMPVWQGQGYNSGMRDAFNLAWKLALVVNGKAGEALLDSYQQERRDHAKAMIDLSVTAGHVLAPPKRWQGAVRDGLSWLLNYLPPVKRYFLEMRFKPMPQYREGALLTDGAGKTSPVGKMFIQPQVTLESGESVLLDEVIGANFAIIGWGCNPQWGLNAGQIARWRAIGVRFIQVVPEVQIHREQDNAPGTLRVGDTQNRLKSWFALHNTAIAVVRPDRFVAALAIPQTLGAQLTALAEKMTLATGDTAHAEEKVA.

Residues 17–46 (QVAI…VVEK) and 285–295 (FRINRVLLAGD) contribute to the FAD site.

Belongs to the PheA/TfdB FAD monooxygenase family. FAD serves as cofactor.

The catalysed reaction is 3-(3-hydroxyphenyl)propanoate + NADH + O2 + H(+) = 3-(2,3-dihydroxyphenyl)propanoate + NAD(+) + H2O. It catalyses the reaction (2E)-3-(3-hydroxyphenyl)prop-2-enoate + NADH + O2 + H(+) = (2E)-3-(2,3-dihydroxyphenyl)prop-2-enoate + NAD(+) + H2O. The protein operates within aromatic compound metabolism; 3-phenylpropanoate degradation. Functionally, catalyzes the insertion of one atom of molecular oxygen into position 2 of the phenyl ring of 3-(3-hydroxyphenyl)propionate (3-HPP) and hydroxycinnamic acid (3HCI). The sequence is that of 3-(3-hydroxy-phenyl)propionate/3-hydroxycinnamic acid hydroxylase from Klebsiella pneumoniae subsp. pneumoniae (strain ATCC 700721 / MGH 78578).